The primary structure comprises 241 residues: Lactate utilization protein C (241 aa).

It belongs to the LutC/YkgG family.

Is involved in L-lactate degradation and allows cells to grow with lactate as the sole carbon source. The protein is Lactate utilization protein C of Geobacillus sp. (strain WCH70).